The primary structure comprises 954 residues: Xylanolytic transcriptional activator xlnR (954 aa).

Disordered stretches follow at residues 1 to 39 (MSTT…LAEG) and 51 to 93 (REAA…SQRD). The segment covering 8–21 (HFPHSYSPFSSSRS) has biased composition (low complexity). The span at 22-33 (LNRMAQSQTSGL) shows a compositional bias: polar residues. Residues 64–78 (GKPKDQFQVDNDNHH) show a composition bias toward basic and acidic residues. Over residues 82–91 (SLSNFKNPSQ) the composition is skewed to polar residues. The segment at residues 119 to 145 (CDQCNQLRTKCDGQNPCAHCIDFGLTC) is a DNA-binding region (zn(2)-C6 fungal-type). 4 disordered regions span residues 173–226 (ATNS…HSEA), 310–333 (LMNP…TENP), 566–607 (ELPP…PGNT), and 758–777 (MDGS…STVE). Polar residues predominate over residues 174–183 (TNSGQPNGSS). Over residues 574–590 (ARPDAERDGDPDADLSK) the composition is skewed to basic and acidic residues. Positions 764–777 (NHVSPSGRSSSTVE) are enriched in polar residues.

It belongs to the xlnR/xlr1 family.

It is found in the nucleus. Its function is as follows. Transcriptional activator of the xylanolytic system. Involved in the regulation of extracellular cellulolytic and xylanolytic genes and in the regulation of the intracellular activities of D-xylose catabolic genes in the pentose catabolic pathway (PCP) in response to the presence of D-xylose. This Aspergillus fumigatus (strain ATCC MYA-4609 / CBS 101355 / FGSC A1100 / Af293) (Neosartorya fumigata) protein is Xylanolytic transcriptional activator xlnR (xlnR).